A 595-amino-acid chain; its full sequence is CDPK-related kinase 3 (595 aa).

The tract at residues 1–131 (MGQCYGKVNQ…GTEPEQSLDK (131 aa)) is disordered. A lipid anchor (N-myristoyl glycine) is attached at Gly2. Over residues 20–37 (NTTTYVVSGDGNQIQPLT) the composition is skewed to polar residues. Residues 111–124 (KPKEGPIPEERGTE) show a composition bias toward basic and acidic residues. The Protein kinase domain occupies 143–405 (YELGKEVGRG…AVQALTHPWL (263 aa)). Residues 149 to 157 (VGRGHFGHT) and Lys175 each bind ATP. Residue Asp271 is the Proton acceptor of the active site. Position 311 is a phosphoserine (Ser311). Position 353 is a phosphoserine; by CPK1 and CPK34 (Ser353). An autoinhibitory domain region spans residues 409-439 (SRVIPLDILIYKLVKAYLHATPLRRAALKAL). Residues 428–448 (ATPLRRAALKALAKALTENEL) are calmodulin binding (CaMBD). EF-hand domains are found at residues 446 to 482 (NELVYLRAQFMLLGPNKDGSVSLENFKTALMQNATDA), 483 to 518 (MRESRVPEILHTMESLAYRKMYFEEFCAAAISIHQL), 519 to 558 (EAVDAWEEIATAGFQHFETEGNRVITIEELARELNVGASA), and 559 to 588 (YGHLRDWVRSSDGKLSYLGFTKFLHGVTLR). Residues Asn461, Asp463, Ser465, Lys502, Glu507, Asn540, Glu547, Ser568, Asp570, and Lys572 each coordinate Ca(2+). A Phosphoserine modification is found at Ser574.

It belongs to the protein kinase superfamily. Ser/Thr protein kinase family. CDPK subfamily. Binds calmodulin (CaM) in a calcium-dependent manner. Interacts with GLN1-1. Post-translationally, autophosphorylated. Ubiquitously expressed with higher levels in siliques and roots, especially at the root cap. Particularly present in vascular bundles of stems and leaves.

The protein resides in the cytoplasm. The protein localises to the membrane. It catalyses the reaction L-seryl-[protein] + ATP = O-phospho-L-seryl-[protein] + ADP + H(+). The enzyme catalyses L-threonyl-[protein] + ATP = O-phospho-L-threonyl-[protein] + ADP + H(+). With respect to regulation, not activated by calcium. Autophosphorylation may play an important role in the regulation of the kinase activity. Stimulated by magnesium ions (optimum at 10-15 mM) and manganese ions. May play a role in signal transduction pathways that involve calcium as a second messenger. Serine/threonine kinase that phosphorylates histone H3 an GLN1-1. This is CDPK-related kinase 3 (CRK3) from Arabidopsis thaliana (Mouse-ear cress).